A 107-amino-acid chain; its full sequence is Vasopressin-neurophysin 2 (107 aa).

An intrachain disulfide couples Cys-1 to Cys-6. A Glycine amide modification is found at Gly-9. 7 disulfides stabilise this stretch: Cys-22–Cys-66, Cys-25–Cys-39, Cys-33–Cys-56, Cys-40–Cys-46, Cys-73–Cys-85, Cys-79–Cys-97, and Cys-86–Cys-91.

Belongs to the vasopressin/oxytocin family. As to quaternary structure, interacts with vasopressin receptors V1bR/AVPR1B (Ki=85 pM), V1aR/AVPR1A (Ki=0.6 nM) and V2R/AVPR2 (Ki=4.9 nM). Interacts with oxytocin receptor (OXTR) (Ki=110 nM).

Its subcellular location is the secreted. Its function is as follows. Neurophysin 2 specifically binds vasopressin. In terms of biological role, vasopressin has a direct antidiuretic action on the kidney, it also causes vasoconstriction of the peripheral vessels. Acts by binding to vasopressin receptors (V1bR/AVPR1B, V1aR/AVPR1A, and V2R/AVPR2). In Balaenoptera physalus (Fin whale), this protein is Vasopressin-neurophysin 2 (AVP).